Here is a 149-residue protein sequence, read N- to C-terminus: Histone H2B.3, sperm (149 aa).

The segment at 1–57 is disordered; it reads MPRSPAKTSPRKGSPRKGSPRKGSPSRKASPKRGGKGAKRAGKGGRRRRVVKRRRRR. 6 short sequence motifs (SPKK motif) span residues 4-7, 9-12, 14-17, 19-22, 24-27, and 30-33; these read SPAK, SPRK, SPSR, and SPKR. Basic residues predominate over residues 9 to 20; the sequence is SPRKGSPRKGSP. 3 positions are modified to phosphoserine: Ser-19, Ser-24, and Ser-30. Residues 29-57 show a composition bias toward basic residues; it reads ASPKRGGKGAKRAGKGGRRRRVVKRRRRR. Ser-136 is a glycosylation site (O-linked (GlcNAc) serine). Residue Lys-144 forms a Glycyl lysine isopeptide (Lys-Gly) (interchain with G-Cter in ubiquitin) linkage.

Belongs to the histone H2B family. In terms of assembly, the nucleosome is a histone octamer containing two molecules each of H2A, H2B, H3 and H4 assembled in one H3-H4 heterotetramer and two H2A-H2B heterodimers. The octamer wraps approximately 147 bp of DNA. Post-translationally, monoubiquitination of Lys-144 gives a specific tag for epigenetic transcriptional activation and is also prerequisite for histone H3 'Lys-4' and 'Lys-79' methylation. Phosphorylated on SPKK motifs 4, 5 and 6; which may regulate DNA binding. Dephosphorylated during maturation of spermatids to mature sperm and rephosphorylated at fertilization. In terms of processing, glcNAcylation at Ser-136 promotes monoubiquitination of Lys-144. It fluctuates in response to extracellular glucose, and associates with transcribed genes.

The protein localises to the nucleus. Its subcellular location is the chromosome. Core component of nucleosome. Nucleosomes wrap and compact DNA into chromatin, limiting DNA accessibility to the cellular machineries which require DNA as a template. Histones thereby play a central role in transcription regulation, DNA repair, DNA replication and chromosomal stability. DNA accessibility is regulated via a complex set of post-translational modifications of histones, also called histone code, and nucleosome remodeling. This Parechinus angulosus (Angulate sea urchin) protein is Histone H2B.3, sperm.